A 233-amino-acid chain; its full sequence is Large ribosomal subunit protein uL1 (233 aa).

It belongs to the universal ribosomal protein uL1 family. As to quaternary structure, part of the 50S ribosomal subunit.

Binds directly to 23S rRNA. The L1 stalk is quite mobile in the ribosome, and is involved in E site tRNA release. Its function is as follows. Protein L1 is also a translational repressor protein, it controls the translation of the L11 operon by binding to its mRNA. The chain is Large ribosomal subunit protein uL1 from Campylobacter jejuni subsp. doylei (strain ATCC BAA-1458 / RM4099 / 269.97).